Here is a 651-residue protein sequence, read N- to C-terminus: Acetyl-coenzyme A synthetase (651 aa).

Residues 189–192, threonine 311, and asparagine 335 contribute to the CoA site; that span reads RGGK. ATP-binding positions include 387–389, 411–416, aspartate 500, and arginine 515; these read GEP and DTWWQT. Serine 523 lines the CoA pocket. Arginine 526 is a binding site for ATP. Residues valine 537, histidine 539, and valine 542 each contribute to the Mg(2+) site. CoA is bound at residue arginine 586. At lysine 611 the chain carries N6-acetyllysine.

This sequence belongs to the ATP-dependent AMP-binding enzyme family. Requires Mg(2+) as cofactor. In terms of processing, acetylated. Deacetylation by the SIR2-homolog deacetylase activates the enzyme.

It carries out the reaction acetate + ATP + CoA = acetyl-CoA + AMP + diphosphate. In terms of biological role, catalyzes the conversion of acetate into acetyl-CoA (AcCoA), an essential intermediate at the junction of anabolic and catabolic pathways. AcsA undergoes a two-step reaction. In the first half reaction, AcsA combines acetate with ATP to form acetyl-adenylate (AcAMP) intermediate. In the second half reaction, it can then transfer the acetyl group from AcAMP to the sulfhydryl group of CoA, forming the product AcCoA. The protein is Acetyl-coenzyme A synthetase of Brucella melitensis biotype 2 (strain ATCC 23457).